Reading from the N-terminus, the 365-residue chain is Histidinol-phosphate aminotransferase (365 aa).

The tract at residues 1–22 (MSRPVPNPGILDIAPYTPGKSP) is disordered. At Lys-221 the chain carries N6-(pyridoxal phosphate)lysine.

Belongs to the class-II pyridoxal-phosphate-dependent aminotransferase family. Histidinol-phosphate aminotransferase subfamily. As to quaternary structure, homodimer. Pyridoxal 5'-phosphate serves as cofactor.

The enzyme catalyses L-histidinol phosphate + 2-oxoglutarate = 3-(imidazol-4-yl)-2-oxopropyl phosphate + L-glutamate. Its pathway is amino-acid biosynthesis; L-histidine biosynthesis; L-histidine from 5-phospho-alpha-D-ribose 1-diphosphate: step 7/9. This Rhodopseudomonas palustris (strain BisB5) protein is Histidinol-phosphate aminotransferase.